The primary structure comprises 79 residues: Large ribosomal subunit protein bL31 (79 aa).

This sequence belongs to the bacterial ribosomal protein bL31 family. Type A subfamily. Part of the 50S ribosomal subunit.

Its function is as follows. Binds the 23S rRNA. In Trichormus variabilis (strain ATCC 29413 / PCC 7937) (Anabaena variabilis), this protein is Large ribosomal subunit protein bL31.